A 294-amino-acid chain; its full sequence is Acetyl-coenzyme A carboxylase carboxyl transferase subunit beta (294 aa).

One can recognise a CoA carboxyltransferase N-terminal domain in the interval 30-294 (IMTKCPECKK…PEVGGEADGE (265 aa)). Zn(2+)-binding residues include Cys34, Cys37, Cys53, and Cys56. The segment at 34-56 (CPECKKIMYTKELQKNLMVCNYC) adopts a C4-type zinc-finger fold.

Belongs to the AccD/PCCB family. In terms of assembly, acetyl-CoA carboxylase is a heterohexamer composed of biotin carboxyl carrier protein (AccB), biotin carboxylase (AccC) and two subunits each of ACCase subunit alpha (AccA) and ACCase subunit beta (AccD). Requires Zn(2+) as cofactor.

It localises to the cytoplasm. It catalyses the reaction N(6)-carboxybiotinyl-L-lysyl-[protein] + acetyl-CoA = N(6)-biotinyl-L-lysyl-[protein] + malonyl-CoA. The protein operates within lipid metabolism; malonyl-CoA biosynthesis; malonyl-CoA from acetyl-CoA: step 1/1. Component of the acetyl coenzyme A carboxylase (ACC) complex. Biotin carboxylase (BC) catalyzes the carboxylation of biotin on its carrier protein (BCCP) and then the CO(2) group is transferred by the transcarboxylase to acetyl-CoA to form malonyl-CoA. The chain is Acetyl-coenzyme A carboxylase carboxyl transferase subunit beta from Listeria monocytogenes serotype 4a (strain HCC23).